Here is a 443-residue protein sequence, read N- to C-terminus: MQNELAQTIPELINWTKEREFSLSLSSDRLAFLLAISIYNNEQTDGELLESDLIDLFRYVSEVFDQSEATLTQRANNAINDLVKQRFLNRFSSEFTEGLAIYRITPLGVGVADYYVRQREFSTLRLSIQLSIVADEIQRASSAAEEGGDERFWRNNVFAPLKYSVAEIFDSIDLSQRMMDENQHQIRERIAELLSQNWHEAILSCEQLLDETSGNLRELQDTLNAAGDKLQAQLLRIQSCLIGRDDLDFVDQLIVNLQNKLDRIISWGQQAIDLWIGYDRHVHKFIRTAIDMDKNRVFGQRLRQSIQDYFNAPWLLYTAKAESLLDLRDDETMLNETEAVGELPSELEYESLSDVQEQIISVMQAHLAPFRAEGKPIDLGAVLREQLALYPQSRHFDVARIIVDQAVKLGMASLDSQAVYPEWQAINDNGAEVQANVIDQYNK.

Residues 209 to 237 (LDETSGNLRELQDTLNAAGDKLQAQLLRI) form a leucine-zipper region.

The protein belongs to the MukF family. In terms of assembly, interacts, and probably forms a ternary complex, with MukE and MukB via its C-terminal region. The complex formation is stimulated by calcium or magnesium. It is required for an interaction between MukE and MukB.

The protein localises to the cytoplasm. It is found in the nucleoid. Functionally, involved in chromosome condensation, segregation and cell cycle progression. May participate in facilitating chromosome segregation by condensation DNA from both sides of a centrally located replisome during cell division. Not required for mini-F plasmid partitioning. Probably acts via its interaction with MukB and MukE. Overexpression results in anucleate cells. It has a calcium binding activity. This chain is Chromosome partition protein MukF, found in Actinobacillus pleuropneumoniae serotype 7 (strain AP76).